Reading from the N-terminus, the 442-residue chain is Trigger factor (442 aa).

The PPIase FKBP-type domain maps to 165 to 250 (DDRVIIDFEG…LQKVMAPELP (86 aa)).

The protein belongs to the FKBP-type PPIase family. Tig subfamily.

It is found in the cytoplasm. It catalyses the reaction [protein]-peptidylproline (omega=180) = [protein]-peptidylproline (omega=0). Its function is as follows. Involved in protein export. Acts as a chaperone by maintaining the newly synthesized protein in an open conformation. Functions as a peptidyl-prolyl cis-trans isomerase. The protein is Trigger factor of Coxiella burnetii (strain RSA 493 / Nine Mile phase I).